Reading from the N-terminus, the 117-residue chain is Large ribosomal subunit protein uL18 (117 aa).

The protein belongs to the universal ribosomal protein uL18 family. Part of the 50S ribosomal subunit; part of the 5S rRNA/L5/L18/L25 subcomplex. Contacts the 5S and 23S rRNAs.

Its function is as follows. This is one of the proteins that bind and probably mediate the attachment of the 5S RNA into the large ribosomal subunit, where it forms part of the central protuberance. The sequence is that of Large ribosomal subunit protein uL18 from Vibrio cholerae serotype O1 (strain ATCC 39541 / Classical Ogawa 395 / O395).